The following is a 412-amino-acid chain: L-cysteine:1D-myo-inositol 2-amino-2-deoxy-alpha-D-glucopyranoside ligase (412 aa).

Cys43 serves as a coordination point for Zn(2+). Residues 43-46 (CGIT), Thr58, and 81-83 (NVT) each bind L-cysteinyl-5'-AMP. The 'HIGH' region motif lies at 45 to 55 (ITPYDATHLGH). The 'ERGGDP' region motif lies at 186–191 (ERGGDP). Trp227 contacts L-cysteinyl-5'-AMP. Residue Cys231 coordinates Zn(2+). Position 249–251 (249–251 (GND)) interacts with L-cysteinyl-5'-AMP. Zn(2+) is bound at residue His256. Ile283 is an L-cysteinyl-5'-AMP binding site. The 'KMSKS' region signature appears at 289–293 (KMSKS).

The protein belongs to the class-I aminoacyl-tRNA synthetase family. MshC subfamily. In terms of assembly, monomer. It depends on Zn(2+) as a cofactor.

It carries out the reaction 1D-myo-inositol 2-amino-2-deoxy-alpha-D-glucopyranoside + L-cysteine + ATP = 1D-myo-inositol 2-(L-cysteinylamino)-2-deoxy-alpha-D-glucopyranoside + AMP + diphosphate + H(+). Its function is as follows. Catalyzes the ATP-dependent condensation of GlcN-Ins and L-cysteine to form L-Cys-GlcN-Ins. This is L-cysteine:1D-myo-inositol 2-amino-2-deoxy-alpha-D-glucopyranoside ligase from Salinispora arenicola (strain CNS-205).